Consider the following 184-residue polypeptide: Inner membrane-spanning protein YciB (184 aa).

The next 5 membrane-spanning stretches (helical) occupy residues 19 to 39 (LVGI…QLLI), 52 to 72 (LFMG…NQLE), 76 to 96 (WKVT…QYGF), 123 to 143 (LGWA…SQYL), and 151 to 171 (FKTF…GIYI).

Belongs to the YciB family.

The protein resides in the cell inner membrane. Its function is as follows. Plays a role in cell envelope biogenesis, maintenance of cell envelope integrity and membrane homeostasis. This Pasteurella multocida (strain Pm70) protein is Inner membrane-spanning protein YciB.